The primary structure comprises 374 residues: Glutamate 5-kinase (374 aa).

Lys16 serves as a coordination point for ATP. Substrate contacts are provided by Ser56, Asp143, and Asn155. ATP is bound by residues 175–176 (TD) and 217–223 (SGGMLTK). A PUA domain is found at 282–360 (RGALILDDGA…SNIGAILGYK (79 aa)).

Belongs to the glutamate 5-kinase family.

It localises to the cytoplasm. The enzyme catalyses L-glutamate + ATP = L-glutamyl 5-phosphate + ADP. The protein operates within amino-acid biosynthesis; L-proline biosynthesis; L-glutamate 5-semialdehyde from L-glutamate: step 1/2. Its function is as follows. Catalyzes the transfer of a phosphate group to glutamate to form L-glutamate 5-phosphate. This Marinomonas sp. (strain MWYL1) protein is Glutamate 5-kinase.